The sequence spans 221 residues: Riboflavin kinase (221 aa).

The interval 1-92 (MVTPEDLECL…YRLFGRQEKS (92 aa)) is H-T-H motif-like. The segment at 93-221 (LMLNGTVQSG…GDEVTIEVTL (129 aa)) is riboflavin kinase. A CDP-binding site is contributed by 102-107 (GLGEGA). Mg(2+)-binding residues include T131 and N133. T188 and E196 together coordinate FMN. 201 to 204 (EGLR) contacts CDP.

Belongs to the archaeal riboflavin kinase family. The cofactor is Mg(2+).

It catalyses the reaction riboflavin + CTP = CDP + FMN + H(+). It functions in the pathway cofactor biosynthesis; FMN biosynthesis; FMN from riboflavin (CTP route): step 1/1. Functionally, catalyzes the CTP-dependent phosphorylation of riboflavin (vitamin B2) to form flavin mononucleotide (FMN). This is Riboflavin kinase (ribK) from Methanospirillum hungatei JF-1 (strain ATCC 27890 / DSM 864 / NBRC 100397 / JF-1).